The primary structure comprises 382 residues: Histidine biosynthesis bifunctional protein HisB (382 aa).

Residues methionine 1 to alanine 190 are histidinol-phosphatase. Catalysis depends on aspartate 8, which acts as the Nucleophile. Mg(2+) is bound by residues aspartate 8, aspartate 10, and aspartate 129. The Proton donor role is filled by aspartate 10. The interval arginine 191–leucine 382 is imidazoleglycerol-phosphate dehydratase.

It in the N-terminal section; belongs to the histidinol-phosphatase family. In the C-terminal section; belongs to the imidazoleglycerol-phosphate dehydratase family. Requires Mg(2+) as cofactor.

It is found in the cytoplasm. It catalyses the reaction D-erythro-1-(imidazol-4-yl)glycerol 3-phosphate = 3-(imidazol-4-yl)-2-oxopropyl phosphate + H2O. The catalysed reaction is L-histidinol phosphate + H2O = L-histidinol + phosphate. Its pathway is amino-acid biosynthesis; L-histidine biosynthesis; L-histidine from 5-phospho-alpha-D-ribose 1-diphosphate: step 6/9. The protein operates within amino-acid biosynthesis; L-histidine biosynthesis; L-histidine from 5-phospho-alpha-D-ribose 1-diphosphate: step 8/9. This chain is Histidine biosynthesis bifunctional protein HisB, found in Spirosoma linguale (strain ATCC 33905 / DSM 74 / LMG 10896 / Claus 1).